The following is a 32-amino-acid chain: Cytochrome c3, 10 kDa (32 aa).

H16, C25, C28, and H29 together coordinate heme.

Monomer. Binds 1 heme group per subunit.

It is found in the periplasm. Functionally, participates in sulfate respiration coupled with phosphorylation by transferring electrons from the enzyme dehydrogenase to ferredoxin. This chain is Cytochrome c3, 10 kDa, found in Desulfuromonas acetoxidans (Chloropseudomonas ethylica).